The primary structure comprises 134 residues: MSWQAYVDDHLMCDIEGHEGHRLTAAAIVGHDGSVWAQSATFPQFKPEEMNGTMTDFNEPGHLAPTGLHLGGTKYMVIQGEAGAVIRGKKGSGGITIKKTGQALVFGIYEEPVTPGQCNMVVERLGDYLLEQGL.

C13 and C118 form a disulfide bridge. An Involved in PIP2 interaction motif is present at residues 84-100 (AVIRGKKGSGGITIKKT). The residue at position 114 (T114) is a Phosphothreonine.

This sequence belongs to the profilin family. As to quaternary structure, occurs in many kinds of cells as a complex with monomeric actin in a 1:1 ratio. In terms of processing, phosphorylated by MAP kinases.

Its subcellular location is the cytoplasm. The protein resides in the cytoskeleton. In terms of biological role, binds to actin and affects the structure of the cytoskeleton. At high concentrations, profilin prevents the polymerization of actin, whereas it enhances it at low concentrations. The polypeptide is Profilin-3 (Olea europaea (Common olive)).